The sequence spans 369 residues: Hsc70-interacting protein (369 aa).

The segment at 38-97 (MGGKVPPATQKAKSEENTKEEKPDSKKVEEDLKADEPSSEESDLEIDKEGVIEPDTDAPQ) is disordered. Residues 49-73 (AKSEENTKEEKPDSKKVEEDLKADE) are compositionally biased toward basic and acidic residues. TPR repeat units lie at residues 114 to 147 (ANDK…NPRL), 148 to 181 (AILY…NPDS), and 182 to 215 (AQPY…DYDE). Residues 256-272 (KAREEHERAQREEEARR) show a composition bias toward basic and acidic residues. Residues 256 to 300 (KAREEHERAQREEEARRQSGAQYGSFPGGFPGGMPGNFPGGMPGM) form a disordered region. A compositionally biased stretch (gly residues) spans 281 to 300 (FPGGFPGGMPGNFPGGMPGM). Positions 319–358 (DPEVLAAMQDPEVMVAFQDVAQNPANMSKYQSNPKVMNLI) constitute an STI1 domain. Serine 346 carries the phosphoserine; by GRK5 modification. 2 positions are modified to N6-acetyllysine: lysine 353 and lysine 360.

The protein belongs to the FAM10 family. In terms of assembly, homotetramer. Interacts with HSC70 as well as DNAJ homologs and HSP90. Interacts (via the C-terminus 303- 319 AA) with GRK5.

Its subcellular location is the cytoplasm. Functionally, one HIP oligomer binds the ATPase domains of at least two HSC70 molecules dependent on activation of the HSC70 ATPase by HSP40. Stabilizes the ADP state of HSC70 that has a high affinity for substrate protein. Through its own chaperone activity, it may contribute to the interaction of HSC70 with various target proteins. This Homo sapiens (Human) protein is Hsc70-interacting protein (ST13).